We begin with the raw amino-acid sequence, 793 residues long: Phenylalanine--tRNA ligase beta subunit (793 aa).

In terms of domain architecture, tRNA-binding spans 39–148 (AAPFKGVKAA…EGDFPGVDLH (110 aa)). Residues 401–476 (PPQATIILRK…RLYGYDRLPS (76 aa)) form the B5 domain. The Mg(2+) site is built by aspartate 454, aspartate 460, glutamate 463, and glutamate 464. Residues 699 to 792 (SKFPAIRRDI…LVTELGAIIR (94 aa)) form the FDX-ACB domain.

The protein belongs to the phenylalanyl-tRNA synthetase beta subunit family. Type 1 subfamily. As to quaternary structure, tetramer of two alpha and two beta subunits. It depends on Mg(2+) as a cofactor.

It is found in the cytoplasm. It carries out the reaction tRNA(Phe) + L-phenylalanine + ATP = L-phenylalanyl-tRNA(Phe) + AMP + diphosphate + H(+). The protein is Phenylalanine--tRNA ligase beta subunit of Nitrosococcus oceani (strain ATCC 19707 / BCRC 17464 / JCM 30415 / NCIMB 11848 / C-107).